A 157-amino-acid polypeptide reads, in one-letter code: tRNA (cytidine(34)-2'-O)-methyltransferase (157 aa).

S-adenosyl-L-methionine-binding residues include Leu-78, Gly-100, Ile-122, and Ser-130.

Belongs to the class IV-like SAM-binding methyltransferase superfamily. RNA methyltransferase TrmH family. TrmL subfamily. In terms of assembly, homodimer.

The protein resides in the cytoplasm. It catalyses the reaction cytidine(34) in tRNA + S-adenosyl-L-methionine = 2'-O-methylcytidine(34) in tRNA + S-adenosyl-L-homocysteine + H(+). The catalysed reaction is 5-carboxymethylaminomethyluridine(34) in tRNA(Leu) + S-adenosyl-L-methionine = 5-carboxymethylaminomethyl-2'-O-methyluridine(34) in tRNA(Leu) + S-adenosyl-L-homocysteine + H(+). In terms of biological role, methylates the ribose at the nucleotide 34 wobble position in the two leucyl isoacceptors tRNA(Leu)(CmAA) and tRNA(Leu)(cmnm5UmAA). Catalyzes the methyl transfer from S-adenosyl-L-methionine to the 2'-OH of the wobble nucleotide. In Escherichia coli O6:H1 (strain CFT073 / ATCC 700928 / UPEC), this protein is tRNA (cytidine(34)-2'-O)-methyltransferase.